The sequence spans 115 residues: MQKLIQDITKEQLRTDLPAFRPGDTLRVHVKVVEGNRERIQIFEGVVIKRRGGGISETFTVRKISYGVGVERTFPVHTPKIAKIEVVRYGKVRRAKLYYLRELRGKAARIKEIRR.

The protein belongs to the bacterial ribosomal protein bL19 family.

Its function is as follows. This protein is located at the 30S-50S ribosomal subunit interface and may play a role in the structure and function of the aminoacyl-tRNA binding site. In Bacillus velezensis (strain DSM 23117 / BGSC 10A6 / LMG 26770 / FZB42) (Bacillus amyloliquefaciens subsp. plantarum), this protein is Large ribosomal subunit protein bL19.